Consider the following 88-residue polypeptide: Large ribosomal subunit protein eL37 (88 aa).

Zn(2+) is bound by residues C19, C22, C34, and C37. The segment at 19–37 (CNRCGKRSFHVQKKTCASC) adopts a C4-type zinc-finger fold.

The protein belongs to the eukaryotic ribosomal protein eL37 family. The cofactor is Zn(2+).

Its function is as follows. Binds to the 23S rRNA. This Debaryomyces hansenii (strain ATCC 36239 / CBS 767 / BCRC 21394 / JCM 1990 / NBRC 0083 / IGC 2968) (Yeast) protein is Large ribosomal subunit protein eL37 (RPL37).